An 80-amino-acid polypeptide reads, in one-letter code: Mu-conotoxin BuIIIC (80 aa).

The first 22 residues, 1–22 (MMSKLGVLLTICLLLFPLFALP), serve as a signal peptide directing secretion. Positions 23–51 (QDGDQPADRPAERMQDDLSSEQHPLFEKR) are excised as a propeptide. Intrachain disulfides connect Cys-56–Cys-70, Cys-57–Cys-76, and Cys-66–Cys-77. Residue Cys-77 is modified to Cysteine amide.

This sequence belongs to the conotoxin M superfamily. Expressed by the venom duct.

It is found in the secreted. In terms of biological role, mu-conotoxins block voltage-gated sodium channels. Extremely potent inhibitor of Nav1.4/SCN4A (96% inhibition at 1 uM). The inhibition is very slowly reversible. In Conus bullatus (Bubble cone), this protein is Mu-conotoxin BuIIIC.